We begin with the raw amino-acid sequence, 608 residues long: Elongation factor 4 (608 aa).

The 183-residue stretch at 11-193 folds into the tr-type G domain; it reads DRIRNFSIIA…QIVQKIPAPS (183 aa). GTP is bound by residues 23–28 and 140–143; these read DHGKST and NKID.

Belongs to the TRAFAC class translation factor GTPase superfamily. Classic translation factor GTPase family. LepA subfamily.

It is found in the cell membrane. It catalyses the reaction GTP + H2O = GDP + phosphate + H(+). Its function is as follows. Required for accurate and efficient protein synthesis under certain stress conditions. May act as a fidelity factor of the translation reaction, by catalyzing a one-codon backward translocation of tRNAs on improperly translocated ribosomes. Back-translocation proceeds from a post-translocation (POST) complex to a pre-translocation (PRE) complex, thus giving elongation factor G a second chance to translocate the tRNAs correctly. Binds to ribosomes in a GTP-dependent manner. This is Elongation factor 4 from Anoxybacillus flavithermus (strain DSM 21510 / WK1).